The sequence spans 143 residues: Large ribosomal subunit protein uL11 (143 aa).

It belongs to the universal ribosomal protein uL11 family. Part of the ribosomal stalk of the 50S ribosomal subunit. Interacts with L10 and the large rRNA to form the base of the stalk. L10 forms an elongated spine to which L12 dimers bind in a sequential fashion forming a multimeric L10(L12)X complex. One or more lysine residues are methylated.

Its function is as follows. Forms part of the ribosomal stalk which helps the ribosome interact with GTP-bound translation factors. The chain is Large ribosomal subunit protein uL11 from Rhizobium etli (strain ATCC 51251 / DSM 11541 / JCM 21823 / NBRC 15573 / CFN 42).